The following is a 131-amino-acid chain: Small ribosomal subunit protein uS12 (131 aa).

Residues 1 to 22 (MPTTQQLLRKGRKVLQKKSKVP) form a disordered region. Basic residues predominate over residues 9–20 (RKGRKVLQKKSK). Asp89 carries the post-translational modification 3-methylthioaspartic acid. The segment at 102 to 131 (LDTQGVKDRNKSRSKYGTKKPKAGAAAAKK) is disordered. Residues 113–131 (SRSKYGTKKPKAGAAAAKK) show a composition bias toward basic residues.

Belongs to the universal ribosomal protein uS12 family. Part of the 30S ribosomal subunit. Contacts proteins S8 and S17. May interact with IF1 in the 30S initiation complex.

With S4 and S5 plays an important role in translational accuracy. In terms of biological role, interacts with and stabilizes bases of the 16S rRNA that are involved in tRNA selection in the A site and with the mRNA backbone. Located at the interface of the 30S and 50S subunits, it traverses the body of the 30S subunit contacting proteins on the other side and probably holding the rRNA structure together. The combined cluster of proteins S8, S12 and S17 appears to hold together the shoulder and platform of the 30S subunit. This Deinococcus radiodurans (strain ATCC 13939 / DSM 20539 / JCM 16871 / CCUG 27074 / LMG 4051 / NBRC 15346 / NCIMB 9279 / VKM B-1422 / R1) protein is Small ribosomal subunit protein uS12.